A 296-amino-acid polypeptide reads, in one-letter code: Aquaporin NIP1-1 (296 aa).

At methionine 1 the chain carries N-acetylmethionine. The next 2 membrane-spanning stretches (helical) occupy residues 57–77 (LIAEFLGTYFLVFTGCASVVV) and 84–104 (VVTLPGIAIVWGLTIMVLIYS). An NPA 1 motif is present at residues 114–116 (NPA). 3 consecutive transmembrane segments (helical) span residues 136–156 (VISQVIGSTLAAATLRLLFGL), 180–200 (AFTMEFIVTFYLMFIISGVAT), and 205–225 (IGELAGLAIGSTVLLNVLIAA). Residues 233 to 235 (NPG) carry the NPA 2 motif. The chain crosses the membrane as a helical span at residues 249–269 (GIWIYLVAPTLGAIAGAWVYN). Position 286 is a phosphoserine (serine 286).

It belongs to the MIP/aquaporin (TC 1.A.8) family. NIP (TC 1.A.8.12) subfamily. Expressed in roots.

The protein resides in the membrane. Water channel probably required to promote glycerol permeability and water transport across cell membranes. This Arabidopsis thaliana (Mouse-ear cress) protein is Aquaporin NIP1-1 (NIP1-1).